Here is a 468-residue protein sequence, read N- to C-terminus: ATP synthase subunit beta (468 aa).

155–162 (GGAGVGKT) is an ATP binding site.

This sequence belongs to the ATPase alpha/beta chains family. As to quaternary structure, F-type ATPases have 2 components, CF(1) - the catalytic core - and CF(0) - the membrane proton channel. CF(1) has five subunits: alpha(3), beta(3), gamma(1), delta(1), epsilon(1). CF(0) has three main subunits: a(1), b(2) and c(9-12). The alpha and beta chains form an alternating ring which encloses part of the gamma chain. CF(1) is attached to CF(0) by a central stalk formed by the gamma and epsilon chains, while a peripheral stalk is formed by the delta and b chains.

It localises to the cell membrane. The catalysed reaction is ATP + H2O + 4 H(+)(in) = ADP + phosphate + 5 H(+)(out). In terms of biological role, produces ATP from ADP in the presence of a proton gradient across the membrane. The catalytic sites are hosted primarily by the beta subunits. The sequence is that of ATP synthase subunit beta from Bacillus cereus (strain G9842).